Reading from the N-terminus, the 187-residue chain is Adenylate kinase (187 aa).

10 to 15 provides a ligand contact to ATP; it reads GSGKGT. Positions 30–59 are NMP; that stretch reads STGDLLRAEVAAGSPLGLKAKEVMARGDLV. AMP is bound by residues T31, R36, 57 to 59, 85 to 88, and Q92; these read DLV and GYPR. The LID stretch occupies residues 126-136; sequence GRAKAEGREDD. Residue R127 coordinates ATP. Residues R133 and R144 each contribute to the AMP site. G172 provides a ligand contact to ATP.

The protein belongs to the adenylate kinase family. As to quaternary structure, monomer.

The protein resides in the cytoplasm. The catalysed reaction is AMP + ATP = 2 ADP. The protein operates within purine metabolism; AMP biosynthesis via salvage pathway; AMP from ADP: step 1/1. Catalyzes the reversible transfer of the terminal phosphate group between ATP and AMP. Plays an important role in cellular energy homeostasis and in adenine nucleotide metabolism. This chain is Adenylate kinase, found in Xanthomonas campestris pv. campestris (strain 8004).